We begin with the raw amino-acid sequence, 214 residues long: Ribosomal RNA small subunit methyltransferase G (214 aa).

S-adenosyl-L-methionine-binding positions include glycine 81, methionine 86, 132–133, and arginine 147; that span reads VE.

The protein belongs to the methyltransferase superfamily. RNA methyltransferase RsmG family.

The protein localises to the cytoplasm. The enzyme catalyses guanosine(527) in 16S rRNA + S-adenosyl-L-methionine = N(7)-methylguanosine(527) in 16S rRNA + S-adenosyl-L-homocysteine. Its function is as follows. Specifically methylates the N7 position of guanine in position 527 of 16S rRNA. The sequence is that of Ribosomal RNA small subunit methyltransferase G from Ectopseudomonas mendocina (strain ymp) (Pseudomonas mendocina).